The chain runs to 334 residues: Ferrochelatase (334 aa).

Fe cation is bound by residues His-207 and Glu-288.

The protein belongs to the ferrochelatase family.

It localises to the cytoplasm. It carries out the reaction heme b + 2 H(+) = protoporphyrin IX + Fe(2+). It functions in the pathway porphyrin-containing compound metabolism; protoheme biosynthesis; protoheme from protoporphyrin-IX: step 1/1. In terms of biological role, catalyzes the ferrous insertion into protoporphyrin IX. This chain is Ferrochelatase, found in Helicobacter pylori (strain P12).